The chain runs to 85 residues: MAQKKGGGSTRNGRDSQPKMLGVKKFGGEVINAGSIIVRQRGTQFHPGVNVGIGKDHTLYALVDGQVSFAIKGSMNKRTVNVTAA.

Gly residues predominate over residues 1-10; that stretch reads MAQKKGGGST. A disordered region spans residues 1-21; that stretch reads MAQKKGGGSTRNGRDSQPKML.

This sequence belongs to the bacterial ribosomal protein bL27 family.

The chain is Large ribosomal subunit protein bL27 from Polaromonas naphthalenivorans (strain CJ2).